Here is a 400-residue protein sequence, read N- to C-terminus: Acetate kinase (400 aa).

Mg(2+) is bound at residue Asn-7. ATP is bound at residue Lys-14. Arg-90 is a binding site for substrate. The Proton donor/acceptor role is filled by Asp-147. Residues 207–211, 282–284, and 331–335 each bind ATP; these read HLGNG, DFR, and GIGEN. Glu-384 is a Mg(2+) binding site.

This sequence belongs to the acetokinase family. Homodimer. The cofactor is Mg(2+). Requires Mn(2+) as cofactor.

Its subcellular location is the cytoplasm. It catalyses the reaction acetate + ATP = acetyl phosphate + ADP. It participates in metabolic intermediate biosynthesis; acetyl-CoA biosynthesis; acetyl-CoA from acetate: step 1/2. In terms of biological role, catalyzes the formation of acetyl phosphate from acetate and ATP. Can also catalyze the reverse reaction. This Thermoanaerobacterium thermosaccharolyticum (strain ATCC 7956 / DSM 571 / NCIMB 9385 / NCA 3814 / NCTC 13789 / WDCM 00135 / 2032) (Clostridium thermosaccharolyticum) protein is Acetate kinase.